The chain runs to 86 residues: Cell division topological specificity factor (86 aa).

Belongs to the MinE family.

Prevents the cell division inhibition by proteins MinC and MinD at internal division sites while permitting inhibition at polar sites. This ensures cell division at the proper site by restricting the formation of a division septum at the midpoint of the long axis of the cell. The polypeptide is Cell division topological specificity factor (Shewanella halifaxensis (strain HAW-EB4)).